Reading from the N-terminus, the 493-residue chain is Flagellin (493 aa).

The protein belongs to the bacterial flagellin family.

Its subcellular location is the secreted. The protein resides in the bacterial flagellum. Functionally, flagellin is the subunit protein which polymerizes to form the filaments of bacterial flagella. The protein is Flagellin (fliC) of Salmonella rubislaw.